Consider the following 363-residue polypeptide: Biotin synthase (363 aa).

The Radical SAM core domain occupies 40–268; it reads NVVQVSTLLS…ETQVRLSAGR (229 aa). [4Fe-4S] cluster is bound by residues C55, C59, and C62. [2Fe-2S] cluster-binding residues include C99, C131, C191, and R263.

It belongs to the radical SAM superfamily. Biotin synthase family. In terms of assembly, homodimer. Requires [4Fe-4S] cluster as cofactor. The cofactor is [2Fe-2S] cluster.

The enzyme catalyses (4R,5S)-dethiobiotin + (sulfur carrier)-SH + 2 reduced [2Fe-2S]-[ferredoxin] + 2 S-adenosyl-L-methionine = (sulfur carrier)-H + biotin + 2 5'-deoxyadenosine + 2 L-methionine + 2 oxidized [2Fe-2S]-[ferredoxin]. Its pathway is cofactor biosynthesis; biotin biosynthesis; biotin from 7,8-diaminononanoate: step 2/2. Its function is as follows. Catalyzes the conversion of dethiobiotin (DTB) to biotin by the insertion of a sulfur atom into dethiobiotin via a radical-based mechanism. This is Biotin synthase from Flavobacterium johnsoniae (strain ATCC 17061 / DSM 2064 / JCM 8514 / BCRC 14874 / CCUG 350202 / NBRC 14942 / NCIMB 11054 / UW101) (Cytophaga johnsonae).